Reading from the N-terminus, the 122-residue chain is uncharacterized protein (122 aa).

It localises to the mitochondrion. This is an uncharacterized protein from Arabidopsis thaliana (Mouse-ear cress).